The primary structure comprises 478 residues: MSYETVIGLEVHAELSTKTKIFCNCSTKFGAKPNENTCPICMGLPGTLPVLNEEVVHLAVKAGEALHCKINKLNKMDRKNYFYPDLPKAYQISQFDIPICSGGYVEIPTKDGVKKVRLNRIHIEEDAGKLVHLEYEPHSLIDYNRVGVPLVEIVSEPDMRSPEEAVEFMKTLRAMLQYANISDCRMDQGSMRCDANISLREVGSTEYNTKVEIKNINSFRELQKALEKEEKRQKELYDFNEGFRIKQETRRWDSGKGKTVTMRTKEDANDYRYFPEPDIIPIVVKDELLEKVKEEMPELPVERKARFEDQYKLGSKEIEILIEDKALADYFEKLVEAGCESKTASNWILGDMLRLMRETETDSKAIPVPVEHMNQLIEMIKTKEISNTAAKEVFEEMFKTSKEPKVVVKEKGLSQISDESALQKMVEDVINNNEKSVLDYKAGKKQAIGYLVGQVMKQSKGKANPPMVKELLEKVLSE.

It belongs to the GatB/GatE family. GatB subfamily. As to quaternary structure, heterotrimer of A, B and C subunits.

The enzyme catalyses L-glutamyl-tRNA(Gln) + L-glutamine + ATP + H2O = L-glutaminyl-tRNA(Gln) + L-glutamate + ADP + phosphate + H(+). It catalyses the reaction L-aspartyl-tRNA(Asn) + L-glutamine + ATP + H2O = L-asparaginyl-tRNA(Asn) + L-glutamate + ADP + phosphate + 2 H(+). Its function is as follows. Allows the formation of correctly charged Asn-tRNA(Asn) or Gln-tRNA(Gln) through the transamidation of misacylated Asp-tRNA(Asn) or Glu-tRNA(Gln) in organisms which lack either or both of asparaginyl-tRNA or glutaminyl-tRNA synthetases. The reaction takes place in the presence of glutamine and ATP through an activated phospho-Asp-tRNA(Asn) or phospho-Glu-tRNA(Gln). This chain is Aspartyl/glutamyl-tRNA(Asn/Gln) amidotransferase subunit B 2 (gatB2), found in Clostridium acetobutylicum (strain ATCC 824 / DSM 792 / JCM 1419 / IAM 19013 / LMG 5710 / NBRC 13948 / NRRL B-527 / VKM B-1787 / 2291 / W).